The primary structure comprises 683 residues: Pre-mRNA-splicing factor CLF1 (683 aa).

HAT repeat units lie at residues 40–72 (DWQR…FEYE), 74–106 (RDMR…CELR), 108–140 (RDVN…MEES), 142–173 (GQVE…FETR), 175–206 (GQVE…FERK), 291–323 (SILF…LLEE), 336–367 (ATVK…FLET), 374–407 (LTRS…FEIR), 409–440 (EKLD…LEIK), 442–474 (KEFD…LEEN), 476–513 (GDED…FETD), 515–547 (SEFE…YESS), and 582–620 (ENKE…YESI).

Belongs to the crooked-neck family. As to quaternary structure, associated with the spliceosome.

It localises to the nucleus. Its function is as follows. Involved in pre-mRNA splicing and cell cycle progression. Required for the spliceosome assembly and initiation of the DNA replication. This is Pre-mRNA-splicing factor CLF1 (CLF1) from Eremothecium gossypii (strain ATCC 10895 / CBS 109.51 / FGSC 9923 / NRRL Y-1056) (Yeast).